Here is a 630-residue protein sequence, read N- to C-terminus: Protein mono-ADP-ribosyltransferase PARP6 (630 aa).

Cys-237 carries the ADP-ribosylcysteine modification. One can recognise a PARP catalytic domain in the interval 394-620; the sequence is EMTQGSYLEI…QDPKIQKEIM (227 aa). Asp-600 bears the ADP-ribosyl aspartic acid mark.

Belongs to the ARTD/PARP family. In terms of processing, auto-mono-ADP-ribosylated.

The catalysed reaction is L-aspartyl-[protein] + NAD(+) = 4-O-(ADP-D-ribosyl)-L-aspartyl-[protein] + nicotinamide. It carries out the reaction L-cysteinyl-[protein] + NAD(+) = S-(ADP-D-ribosyl)-L-cysteinyl-[protein] + nicotinamide + H(+). Mono-ADP-ribosyltransferase that mediates mono-ADP-ribosylation of target proteins. This chain is Protein mono-ADP-ribosyltransferase PARP6, found in Mus musculus (Mouse).